A 429-amino-acid chain; its full sequence is Probable proton-coupled zinc antiporter SLC30A4 (429 aa).

Residues 1 to 113 (MAGSGAWKRL…LLKQRKVKTR (113 aa)) lie on the Cytoplasmic side of the membrane. The chain crosses the membrane as a helical span at residues 114–134 (LTIAAVLYLLFMIGELVGGYI). At 135–143 (ANSLAIMTD) the chain is on the lumenal side. Residues 144–164 (ALHMLTDLSAIILTLLALWLS) traverse the membrane as a helical segment. Histidine 146 and aspartate 150 together coordinate Zn(2+). Topologically, residues 165–178 (SKSPTKRFTFGFHR) are cytoplasmic. The helical transmembrane segment at 179-199 (LEVLSAMISVLLVYILMGFLL) threads the bilayer. Topologically, residues 200-216 (YEAVQRTIHMKYEINGD) are lumenal. The chain crosses the membrane as a helical span at residues 217–237 (IMLITAAIGVAVNVIMGFLLN). Over 238 to 274 (QSGHHHAHSHSLPSNSPTTGPRCGHNQGQDSLAVRAA) the chain is Cytoplasmic. The segment at 240–264 (GHHHAHSHSLPSNSPTTGPRCGHNQ) is zinc binding. The chain crosses the membrane as a helical span at residues 275-295 (FVHALGDLVQSVGVLIAAYII). Zn(2+)-binding residues include histidine 277 and aspartate 281. At 296 to 310 (RFKPEYRIADPICTY) the chain is on the lumenal side. The chain crosses the membrane as a helical span at residues 311 to 331 (VFSLLVAFTTFRIIWDTVVII). The Cytoplasmic portion of the chain corresponds to 332-429 (LEGVPSHLNV…TCANCQSSSS (98 aa)).

This sequence belongs to the cation diffusion facilitator (CDF) transporter (TC 2.A.4) family. SLC30A subfamily. Homodimerization could regulate efficiency for zinc transport. Interacts with TMEM163.

The protein localises to the endosome membrane. It is found in the late endosome membrane. The protein resides in the lysosome membrane. It catalyses the reaction Zn(2+)(in) + 2 H(+)(out) = Zn(2+)(out) + 2 H(+)(in). Probable proton-coupled zinc ion antiporter mediating zinc import from cytoplasm potentially into the endocytic compartment. Controls zinc deposition in milk. The chain is Probable proton-coupled zinc antiporter SLC30A4 from Bos taurus (Bovine).